The chain runs to 363 residues: Autophagy-related protein 3 (363 aa).

Composition is skewed to basic and acidic residues over residues 84–106 (DFAG…RGDG) and 129–138 (ARVRDVRTVD). Residues 84–171 (DFAGDAGHDE…DDEAIIRDPK (88 aa)) are flexible region. The disordered stretch occupies residues 84–174 (DFAGDAGHDE…AIIRDPKADN (91 aa)). Over residues 139–164 (ESGEMGEREDDEDDIPDMEDDDDDDE) the composition is skewed to acidic residues. Cysteine 247 acts as the Glycyl thioester intermediate in catalysis. Residues 251–339 (SVMKTLLDRA…EEEVAIRVDQ (89 aa)) are handle region.

This sequence belongs to the ATG3 family. In terms of assembly, monomer. Interacts with atg8 through an intermediate thioester bond through the C-terminal Gly of atg8. Interacts with the C-terminal region of the E1-like atg7 enzyme. Also interacts with the atg12-atg5 conjugate.

The protein resides in the cytoplasm. In terms of biological role, E2 conjugating enzyme required for the cytoplasm to vacuole transport (Cvt) and autophagy. Required for selective autophagic degradation of the nucleus (nucleophagy) as well as for mitophagy which contributes to regulate mitochondrial quantity and quality by eliminating the mitochondria to a basal level to fulfill cellular energy requirements and preventing excess ROS production. Responsible for the E2-like covalent binding of phosphatidylethanolamine to the C-terminal Gly of atg8. The atg12-atg5 conjugate plays a role of an E3 and promotes the transfer of atg8 from atg3 to phosphatidylethanolamine (PE). This step is required for the membrane association of atg8. The formation of the atg8-phosphatidylethanolamine conjugate is essential for autophagy and for the cytoplasm to vacuole transport (Cvt). The atg8-PE conjugate mediates tethering between adjacent membranes and stimulates membrane hemifusion, leading to expansion of the autophagosomal membrane during autophagy. Required for normal mycelial growth and conidiogenesis, and regulates sclerotial formation. Plays an essential role in pathogenesis. This Botryotinia fuckeliana (strain BcDW1) (Noble rot fungus) protein is Autophagy-related protein 3.